The chain runs to 454 residues: MKKLFGTDGVRGVANVYPMTTEMAMQIGRAAAHIFRNGKSRHRIVIGKDTRLSGYMIENALVAGICSMGVDVLQVGPLPTPGIANITSSMRADAGVVISASHNPFQDNGIKFFCRDGFKLPDEMELRIEELIFSGDMDSMRPIANEVGKAYRIDDAAGRFVVFLKSTFPKDMDLSGLKIVLDCANGAAYKVAPAVFEELGAEVIAIGVKPNGTNINAGCGSLHPEVISAAVKEHGADLGIALDGDADRVIFVDEFGNEVNGDNIMAICATDMLQKGTLNKQTLVATVMSNMGLDIAVKRAGGRVIKTAVGDRYVVEEMQKGGYNLGGEQSGHMIFLDHNTTGDGILSALQVLAVMQRQGKRLSELAEVMFALPQVLVNVRVAEKRDVMTIPAVAGLIGDIEAKVKDEGRILIRYSGTEPLLRIMLEGQDKYQISGWAKEIADLVEKNIGGSKVG.

The active-site Phosphoserine intermediate is Ser-101. Residues Ser-101, Asp-243, Asp-245, and Asp-247 each contribute to the Mg(2+) site. Position 101 is a phosphoserine (Ser-101).

This sequence belongs to the phosphohexose mutase family. The cofactor is Mg(2+). In terms of processing, activated by phosphorylation.

The enzyme catalyses alpha-D-glucosamine 1-phosphate = D-glucosamine 6-phosphate. Catalyzes the conversion of glucosamine-6-phosphate to glucosamine-1-phosphate. This Geotalea daltonii (strain DSM 22248 / JCM 15807 / FRC-32) (Geobacter daltonii) protein is Phosphoglucosamine mutase.